An 86-amino-acid chain; its full sequence is Large ribosomal subunit protein uL23 (86 aa).

The protein belongs to the universal ribosomal protein uL23 family. As to quaternary structure, part of the 50S ribosomal subunit. Contacts protein L29.

In terms of biological role, binds to 23S rRNA. One of the proteins that surrounds the polypeptide exit tunnel on the outside of the ribosome. The polypeptide is Large ribosomal subunit protein uL23 (Thermococcus kodakarensis (strain ATCC BAA-918 / JCM 12380 / KOD1) (Pyrococcus kodakaraensis (strain KOD1))).